Reading from the N-terminus, the 469-residue chain is Glutamine synthetase (469 aa).

The GS beta-grasp domain occupies Glu16–Thr100. Positions Thr108–Ile469 constitute a GS catalytic domain. Positions 133 and 135 each coordinate Mg(2+). Residue Glu207 participates in ATP binding. 2 residues coordinate Mg(2+): Glu212 and Glu220. L-glutamate-binding positions include Asn264 to Gly265 and Gly265. Residue His269 participates in Mg(2+) binding. ATP-binding positions include His271–Ser273 and Ser273. Residues Arg321, Glu327, and Arg339 each contribute to the L-glutamate site. Arg339, Arg344, and Lys353 together coordinate ATP. Residue Glu358 coordinates Mg(2+). Arg360 contacts L-glutamate. Residue Tyr398 is modified to O-AMP-tyrosine.

The protein belongs to the glutamine synthetase family. As to quaternary structure, oligomer of 12 subunits arranged in the form of two hexagons. Mg(2+) is required as a cofactor.

It localises to the cytoplasm. It carries out the reaction L-glutamate + NH4(+) + ATP = L-glutamine + ADP + phosphate + H(+). With respect to regulation, the activity of this enzyme could be controlled by adenylation under conditions of abundant glutamine. Catalyzes the ATP-dependent biosynthesis of glutamine from glutamate and ammonia. The protein is Glutamine synthetase of Aquifex aeolicus (strain VF5).